Here is a 607-residue protein sequence, read N- to C-terminus: Elongation factor 4 (607 aa).

A tr-type G domain is found at 6–188 (SRIRNFSIIA…AIVARIPPPR (183 aa)). Residues 18-23 (DHGKST) and 135-138 (NKID) contribute to the GTP site.

This sequence belongs to the TRAFAC class translation factor GTPase superfamily. Classic translation factor GTPase family. LepA subfamily.

It is found in the cell inner membrane. It catalyses the reaction GTP + H2O = GDP + phosphate + H(+). Its function is as follows. Required for accurate and efficient protein synthesis under certain stress conditions. May act as a fidelity factor of the translation reaction, by catalyzing a one-codon backward translocation of tRNAs on improperly translocated ribosomes. Back-translocation proceeds from a post-translocation (POST) complex to a pre-translocation (PRE) complex, thus giving elongation factor G a second chance to translocate the tRNAs correctly. Binds to ribosomes in a GTP-dependent manner. This is Elongation factor 4 from Sphingopyxis alaskensis (strain DSM 13593 / LMG 18877 / RB2256) (Sphingomonas alaskensis).